Here is an 800-residue protein sequence, read N- to C-terminus: Nuclear cap-binding protein subunit 1 (800 aa).

The segment at 1–26 (MSRRRAHDTEDESYDHRRNKRRRVSE) is disordered. T9 carries the post-translational modification Phosphothreonine. The MIF4G domain maps to 31–243 (EDRLESLILR…CLWAQIRKLR (213 aa)). The tract at residues 669–700 (LAKADSSSSDSEDDSSHKRKKPITHADKPSEE) is disordered.

Belongs to the NCBP1 family. In terms of assembly, component of the nuclear cap-binding complex (CBC), a heterodimer composed of Cbp80 and Cbp20 that interacts with m7GpppG-capped RNA.

The protein resides in the nucleus. In terms of biological role, component of the cap-binding complex (CBC), which binds cotranscriptionally to the 5'-cap of pre-mRNAs and is involved in various processes such as pre-mRNA splicing and RNA-mediated gene silencing (RNAi). The CBC complex is involved in miRNA-mediated RNA interference via its interaction with Ars2 and is required for primary microRNAs (miRNAs) processing. Also involved in innate immunity via the short interfering RNAs (siRNAs) processing machinery by restricting the viral RNA production. In the CBC complex, Cbp80 does not bind directly capped RNAs (m7GpppG-capped RNA) but is required to stabilize the movement of the N-terminal loop of Cbp20 and lock the CBC into a high affinity cap-binding state with the cap structure. In Drosophila erecta (Fruit fly), this protein is Nuclear cap-binding protein subunit 1 (Cbp80).